A 530-amino-acid polypeptide reads, in one-letter code: Equilibrative nucleoside transporter 4 (530 aa).

The segment at 1 to 21 (MGSVGSQRLEEPSVAGTPDPG) is disordered. Over 1-68 (MGSVGSQRLE…DEPVPDDRYH (68 aa)) the chain is Extracellular. The chain crosses the membrane as a helical span at residues 69–89 (AIYFAMLLAGVGFLLPYNSFI). Residues 90–101 (TDVDYLHHKYPG) are Cytoplasmic-facing. A helical membrane pass occupies residues 102–122 (TSIVFDMSLTYILVALAAVLL). Residues 123 to 139 (NNVLVERLTLHTRITAG) are Extracellular-facing. The chain crosses the membrane as a helical span at residues 140–160 (YLLALGPLLFISICDVWLQLF). The Cytoplasmic portion of the chain corresponds to 161 to 166 (SRDQAY). Residues 167–187 (AINLAAVGTVAFGCTVQQSSF) form a helical membrane-spanning segment. Topologically, residues 188–231 (YGYTGMLPKRYTQGVMTGESTAGVMISLSRILTKLLLPDERAST) are extracellular. The chain crosses the membrane as a helical span at residues 232-252 (LIFFLVSVALELLCFLLHLLV). Residues 253 to 351 (RRSRFVLFYT…LLLHRYVVAR (99 aa)) lie on the Cytoplasmic side of the membrane. The chain crosses the membrane as a helical span at residues 352-372 (VIWADMLSIAVTYFITLCLFP). At 373-381 (GLESEIRHC) the chain is on the extracellular side. Residues 382–402 (ILGEWLPILIMAVFNLSDFVG) traverse the membrane as a helical segment. At 403 to 416 (KILAALPVDWRGTH) the chain is on the cytoplasmic side. A helical transmembrane segment spans residues 417–437 (LLACSCLRVVFIPLFILCVYP). Residues 438–450 (SGMPALRHPAWPC) lie on the Extracellular side of the membrane. Residues 451-471 (IFSLLMGISNGYFGSVPMILA) traverse the membrane as a helical segment. Over 472 to 486 (AGKVSPKQRELAGNT) the chain is Cytoplasmic. The helical transmembrane segment at 487–509 (MTVSYMSGLTLGSAVAYCTYSLT) threads the bilayer. At 510 to 530 (RDAHGSCLHASTANGSILAGL) the chain is on the extracellular side. A glycan (N-linked (GlcNAc...) asparagine) is linked at Asn523.

This sequence belongs to the SLC29A/ENT transporter (TC 2.A.57) family. Post-translationally, N-glycosylated. As to expression, mainly expressed in brain and skeletal muscle. In brain, expressed in cerebellum, cerebral cortex, medulla oblongata, occipital pole, frontal and temporal lobes putamen, spinal cord, substancia nigra, hippocampus, caudate nucleus, nucleus accumbens, pons and choroid plexus. Expressed in heart, in both cardiomyocytes and vascular endothelial cells. Also expressed in adrenal gland, small intestine, pancreas, kidney, liver, bone marrow, lymph node. Located in endometrial stroma, where the expression is high in the proliferative phase, decreases during the secretory phase, and is no longer detectable in the menstrual phase.

Its subcellular location is the cell membrane. It localises to the apical cell membrane. The catalysed reaction is serotonin(out) = serotonin(in). The enzyme catalyses dopamine(out) = dopamine(in). It catalyses the reaction (R)-noradrenaline(out) = (R)-noradrenaline(in). It carries out the reaction (R)-adrenaline(out) = (R)-adrenaline(in). The catalysed reaction is histamine(out) = histamine(in). The enzyme catalyses tyramine(in) = tyramine(out). It catalyses the reaction guanidine(out) = guanidine(in). It carries out the reaction adenosine(in) = adenosine(out). Activated at acidic pH. Functionally, electrogenic voltage-dependent transporter that mediates the transport of a variety of endogenous bioactive amines, cationic xenobiotics and drugs. Utilizes the physiologic inside-negative membrane potential as a driving force to facilitate cellular uptake of organic cations. Functions as a Na(+)- and Cl(-)-independent bidirectional transporter. Substrate transport is pH-dependent and enhanced under acidic condition, which is most likely the result of allosteric changes in the transporter structure. Implicated in monoamine neurotransmitters uptake such as serotonin, dopamine, adrenaline/epinephrine, noradrenaline/norepinephrine, histamine and tyramine, thereby supporting a role in homeostatic regulation of aminergic neurotransmission in the central nervous system. Also responsible for the uptake of bioactive amines and drugs through the blood-cerebrospinal fluid (CSF) barrier, from the CSF into choroid plexus epithelial cells, thereby playing a significant role in the clearance of cationic neurotoxins, xenobiotics and metabolic waste in the brain. Involved in bidirectional transport of the purine nucleoside adenosine and plays a role in the regulation of extracellular adenosine concentrations in cardiac tissues, in particular during ischemia. May be involved in organic cation uptake from the tubular lumen into renal tubular cells, thereby contributing to organic cation reabsorption in the kidney. Also transports guanidine. The polypeptide is Equilibrative nucleoside transporter 4 (Homo sapiens (Human)).